The sequence spans 395 residues: HCLS1-binding protein 3 (395 aa).

Methionine 1 is subject to N-acetylmethionine. A Phosphoserine modification is found at serine 3. Residues 19–142 (GLDLSVPQHQ…EFLGTRAPGA (124 aa)) form the PX domain. Disordered stretches follow at residues 143 to 310 (TGLA…KELF) and 322 to 374 (LGSE…AMDE). Over residues 162 to 174 (DSDEAFDFFEQQD) the composition is skewed to acidic residues. Serine 191 is modified (phosphoserine). Acidic residues predominate over residues 194-206 (GEEEEEEEEEEVL). Composition is skewed to basic and acidic residues over residues 249–260 (SDKKVSETRRPL) and 299–310 (RPEHGDASKELF). Phosphoserine is present on serine 254. Residues 329–339 (KPQTKPKPLVP) show a composition bias toward pro residues. Lysine 341 carries the post-translational modification N6-acetyllysine.

In terms of assembly, binds HCLS1. Interacts with the SH3 domain of HCLS1 in vitro. In terms of tissue distribution, ubiquitously expressed.

In terms of biological role, may be a modulator of IL-2 signaling. The polypeptide is HCLS1-binding protein 3 (Hs1bp3) (Mus musculus (Mouse)).